The sequence spans 142 residues: Fusaric acid resistance protein FusB (142 aa).

Residues Ala73–Arg142 are disordered. Over residues Ser81–Arg142 the composition is skewed to low complexity.

Functionally, involved in the resistance (detoxification) of the fungal toxin fusaric acid. This is Fusaric acid resistance protein FusB (fusB) from Burkholderia cepacia (Pseudomonas cepacia).